Consider the following 427-residue polypeptide: Protein TolB homolog (427 aa).

An N-terminal signal peptide occupies residues 1–20 (MLRRIFVSTFLVFGIVSLYA).

It belongs to the TolB family.

Its subcellular location is the periplasm. The chain is Protein TolB homolog from Chlamydia caviae (strain ATCC VR-813 / DSM 19441 / 03DC25 / GPIC) (Chlamydophila caviae).